Consider the following 208-residue polypeptide: Small ribosomal subunit protein uS4 (208 aa).

The tract at residues 29-48 (MERRPYGPGQHGRARRKQDS) is disordered. The 61-residue stretch at 95 to 155 (QRLDALVLRA…ERSEKMVPFQ (61 aa)) folds into the S4 RNA-binding domain.

Belongs to the universal ribosomal protein uS4 family. Part of the 30S ribosomal subunit. Contacts protein S5. The interaction surface between S4 and S5 is involved in control of translational fidelity.

One of the primary rRNA binding proteins, it binds directly to 16S rRNA where it nucleates assembly of the body of the 30S subunit. In terms of biological role, with S5 and S12 plays an important role in translational accuracy. The sequence is that of Small ribosomal subunit protein uS4 from Micrococcus luteus (strain ATCC 4698 / DSM 20030 / JCM 1464 / CCM 169 / CCUG 5858 / IAM 1056 / NBRC 3333 / NCIMB 9278 / NCTC 2665 / VKM Ac-2230) (Micrococcus lysodeikticus).